Consider the following 298-residue polypeptide: Proline iminopeptidase (298 aa).

The AB hydrolase-1 domain occupies Val-26 to Asp-277. Ser-103 (nucleophile) is an active-site residue. Residue Asp-244 is part of the active site. Catalysis depends on His-271, which acts as the Proton donor.

The protein belongs to the peptidase S33 family. In terms of assembly, monomer.

It carries out the reaction Release of N-terminal proline from a peptide.. In terms of biological role, releases the N-terminal proline from various substrates. Cleaves specifically Pro-betaNA and small peptides containing proline at the amino terminal. No activity against hydroxyproline-betaNA. The protein is Proline iminopeptidase (fpaP) of Elizabethkingia meningoseptica (Chryseobacterium meningosepticum).